The following is a 157-amino-acid chain: SsrA-binding protein (157 aa).

The segment at leucine 133–glycine 157 is disordered. The span at aspartate 135–glycine 157 shows a compositional bias: basic and acidic residues.

The protein belongs to the SmpB family.

It is found in the cytoplasm. Required for rescue of stalled ribosomes mediated by trans-translation. Binds to transfer-messenger RNA (tmRNA), required for stable association of tmRNA with ribosomes. tmRNA and SmpB together mimic tRNA shape, replacing the anticodon stem-loop with SmpB. tmRNA is encoded by the ssrA gene; the 2 termini fold to resemble tRNA(Ala) and it encodes a 'tag peptide', a short internal open reading frame. During trans-translation Ala-aminoacylated tmRNA acts like a tRNA, entering the A-site of stalled ribosomes, displacing the stalled mRNA. The ribosome then switches to translate the ORF on the tmRNA; the nascent peptide is terminated with the 'tag peptide' encoded by the tmRNA and targeted for degradation. The ribosome is freed to recommence translation, which seems to be the essential function of trans-translation. This is SsrA-binding protein from Methylobacterium sp. (strain 4-46).